The following is a 145-amino-acid chain: Large ribosomal subunit protein uL16 (145 aa).

It belongs to the universal ribosomal protein uL16 family. In terms of assembly, part of the 50S ribosomal subunit.

In terms of biological role, binds 23S rRNA and is also seen to make contacts with the A and possibly P site tRNAs. The protein is Large ribosomal subunit protein uL16 of Lactobacillus johnsonii (strain CNCM I-12250 / La1 / NCC 533).